A 710-amino-acid chain; its full sequence is Lactoperoxidase (710 aa).

The N-terminal stretch at 1 to 23 (MKVLLHLPALLASLTLLQTAASA) is a signal peptide. The propeptide occupies 24-80 (SDDPTAETDIIHDTVEEVKVWVNKAFLDSRDRLKMAMTTKIHSTRHLSDYLKHAKGR). Cys-130 and Cys-143 form a disulfide bridge. Asp-223 is a binding site for heme b. The active-site Proton acceptor is His-224. Residue Asp-225 participates in Ca(2+) binding. 2 disulfides stabilise this stretch: Cys-244–Cys-254 and Cys-248–Cys-272. The Ca(2+) site is built by Thr-299, Phe-301, Asp-303, and Ser-305. The residue at position 313 (Ser-313) is a Phosphoserine. Residues Cys-352 and Cys-363 are joined by a disulfide bond. The heme b site is built by Glu-373 and His-466. Tyr-480 carries the 3'-nitrotyrosine modification. 2 disulfide bridges follow: Cys-571/Cys-628 and Cys-669/Cys-694.

This sequence belongs to the peroxidase family. The cofactor is Ca(2+). Heme b serves as cofactor. In terms of tissue distribution, expressed in the colon, including colonocytes and mucin-containing goblet cells. Not detected in the ileum.

The protein localises to the secreted. It localises to the cytoplasm. The catalysed reaction is 2 a phenolic donor + H2O2 = 2 a phenolic radical donor + 2 H2O. It catalyses the reaction thiocyanate + H2O2 + H(+) = hypothiocyanous acid + H2O. The enzyme catalyses iodide + H2O2 = hypoiodite + H2O. Functionally, heme-containing oxidoreductase which catalyzes the conversion of thiocyanate (SCN(-)) into antimicrobial agent hypothiocyanous acid (OSCN(-)) in the presence of hydrogen peroxide (H2O2). Also involved in the conversion of iodide (I(-)) into hypoiodite (IO(-)) in the presence of H2O2. Responsible for the inactivation of a wide range of micro-organisms and hence, important component of defense mechanism. May be implicated in airway host defense against infection. May contribute to maintaining an appropriate H2O2 cellular level, therefore protecting cells from H2O2-caused injuries and inflammation. The protein is Lactoperoxidase of Mus musculus (Mouse).